We begin with the raw amino-acid sequence, 141 residues long: MLSPKRTKYRKAHKGRIHGTAKGGTSLNFGAYGLKAVEPMRVTARQIESARRAITRHLKRQGRVWIRIFPDLPVSTKPAEVRMGSGKGSPEFWAARVHPGRIMFEVDGVPLDLAKRAFELAAAKLPIKTRFITRLGEGGEA.

It belongs to the universal ribosomal protein uL16 family. As to quaternary structure, part of the 50S ribosomal subunit.

Functionally, binds 23S rRNA and is also seen to make contacts with the A and possibly P site tRNAs. This chain is Large ribosomal subunit protein uL16, found in Rhodospirillum centenum (strain ATCC 51521 / SW).